Here is a 149-residue protein sequence, read N- to C-terminus: Large ribosomal subunit protein uL24 (149 aa).

It belongs to the universal ribosomal protein uL24 family. In terms of assembly, part of the 50S ribosomal subunit.

One of two assembly initiator proteins, it binds directly to the 5'-end of the 23S rRNA, where it nucleates assembly of the 50S subunit. Functionally, located at the polypeptide exit tunnel on the outside of the subunit. The protein is Large ribosomal subunit protein uL24 of Hyperthermus butylicus (strain DSM 5456 / JCM 9403 / PLM1-5).